Consider the following 251-residue polypeptide: CDP-diacylglycerol pyrophosphatase (251 aa).

A helical transmembrane segment spans residues 4–24 (AGLLFLVMIVIAVVAAGIGYW).

The protein belongs to the Cdh family.

Its subcellular location is the cell inner membrane. The enzyme catalyses a CDP-1,2-diacyl-sn-glycerol + H2O = a 1,2-diacyl-sn-glycero-3-phosphate + CMP + 2 H(+). It participates in phospholipid metabolism; CDP-diacylglycerol degradation; phosphatidate from CDP-diacylglycerol: step 1/1. In Escherichia coli (strain SE11), this protein is CDP-diacylglycerol pyrophosphatase.